The chain runs to 195 residues: UPF0301 protein Bpro_1142 (195 aa).

The protein belongs to the UPF0301 (AlgH) family.

In Polaromonas sp. (strain JS666 / ATCC BAA-500), this protein is UPF0301 protein Bpro_1142.